Consider the following 216-residue polypeptide: Uracil phosphoribosyltransferase (216 aa).

Residue 30-34 (KNLVR) participates in GTP binding. Residues Arg80, Arg105, and 140-148 (DPMIATAST) contribute to the 5-phospho-alpha-D-ribose 1-diphosphate site. Residues Ile203 and 208–210 (GDA) each bind uracil. A 5-phospho-alpha-D-ribose 1-diphosphate-binding site is contributed by Asp209.

It belongs to the UPRTase family. Mg(2+) is required as a cofactor.

It catalyses the reaction UMP + diphosphate = 5-phospho-alpha-D-ribose 1-diphosphate + uracil. It functions in the pathway pyrimidine metabolism; UMP biosynthesis via salvage pathway; UMP from uracil: step 1/1. Allosterically activated by GTP. Catalyzes the conversion of uracil and 5-phospho-alpha-D-ribose 1-diphosphate (PRPP) to UMP and diphosphate. The protein is Uracil phosphoribosyltransferase of Saccharolobus islandicus (strain Y.N.15.51 / Yellowstone #2) (Sulfolobus islandicus).